A 493-amino-acid chain; its full sequence is Transcript termination protein A18 (493 aa).

Positions 100–256 (MIESKRPLYI…NSIINIAKLS (157 aa)) constitute a Helicase ATP-binding domain. 113–120 (LACGFGKT) is an ATP binding site. The DESH box signature appears at 206–209 (DESH).

The protein belongs to the helicase family. Poxviruses subfamily. In terms of assembly, interacts with G2. Might be part of a transcription complex composed at least of G2, A18, and H5.

The protein localises to the virion. In terms of biological role, DNA helicase which seems to act as a postreplicative transcription termination factor. Involved in ATP-dependent release of nascent RNA. Forms a stable complex with single-stranded DNA, and to a lesser extent RNA. This is Transcript termination protein A18 from Homo sapiens (Human).